A 447-amino-acid chain; its full sequence is BAG family molecular chaperone regulator 5 (447 aa).

BAG domains are found at residues 9-86 (SISR…EQNA), 95-167 (QNIF…EDCM), 182-260 (SVAK…DLEE), 275-350 (SIIK…DLKE), and 365-442 (PHKA…DMKS).

In terms of assembly, binds to the ATPase domain of HSP/HSP70 chaperones. Binds PRKN. Interacts with HSPA8. Interacts with JPH2.

Its function is as follows. Co-chaperone for HSP/HSP70 proteins. It functions as a nucleotide-exchange factor promoting the release of ADP from HSP70, thereby activating HSP70-mediated protein refolding. Has an essential role in maintaining proteostasis at junctional membrane complexes (JMC), where it may function as a scaffold between the HSPA8 chaperone and JMC proteins enabling correct, HSPA8-dependent JMC protein folding. Inhibits both auto-ubiquitination of PRKN and ubiquitination of target proteins by PRKN. This chain is BAG family molecular chaperone regulator 5 (Bag5), found in Mus musculus (Mouse).